The sequence spans 550 residues: Eukaryotic translation initiation factor 3 subunit D-2 (550 aa).

The disordered stretch occupies residues 97–126 (RGRGFRPSVHNNPRNVRNQRGRKGNAMGNI). An RNA gate region spans residues 287–301 (KFDMLTVNETSQEPP). The tract at residues 530 to 550 (SDVSEEEESSEDKPFGLSMNN) is disordered.

Belongs to the eIF-3 subunit D family. As to quaternary structure, component of the eukaryotic translation initiation factor 3 (eIF-3) complex. The eIF-3 complex interacts with pix.

It is found in the cytoplasm. MRNA cap-binding component of the eukaryotic translation initiation factor 3 (eIF-3) complex, which is involved in protein synthesis of a specialized repertoire of mRNAs and, together with other initiation factors, stimulates binding of mRNA and methionyl-tRNAi to the 40S ribosome. The eIF-3 complex specifically targets and initiates translation of a subset of mRNAs involved in cell proliferation. In the eIF-3 complex, eif3d specifically recognizes and binds the 7-methylguanosine cap of a subset of mRNAs. The protein is Eukaryotic translation initiation factor 3 subunit D-2 of Drosophila willistoni (Fruit fly).